A 222-amino-acid chain; its full sequence is Zinc finger C2HC domain-containing protein 1B (222 aa).

Residues 14-43 (ELFPCEVCGRRFAADVLERHGPICKKLFNR) form a C2HC/C3H-type 1 zinc finger. 4 residues coordinate Zn(2+): C18, C21, H33, and C37. The interval 48-78 (FSSLKQRLQGTDIPTVKKTPQSKSPPVRKSN) is disordered. A C2HC/C3H-type 2; degenerate zinc finger spans residues 117–146 (DYIQRPYCMRRFNESAAERHTNFCKDQSSR). The interval 196-222 (PTKSGLAMDPASGAKLRQGFSKSSKKD) is disordered.

It belongs to the ZC2HC1 family. The cofactor is Zn(2+).

This is Zinc finger C2HC domain-containing protein 1B (ZC2HC1B) from Homo sapiens (Human).